A 269-amino-acid chain; its full sequence is Protein tio (269 aa).

A compositionally biased stretch (basic and acidic residues) spans 1–12; the sequence is MANEPQEHEEGK. Positions 1–127 are disordered; it reads MANEPQEHEE…NETKCPDEQN (127 aa). At 1 to 246 the chain is on the cytoplasmic side; that stretch reads MANEPQEHEE…VEKKLTCVIC (246 aa). Residues 27 to 41 show a composition bias toward pro residues; the sequence is PNIPQDPTPGTPPGP. A compositionally biased stretch (low complexity) spans 61 to 74; the sequence is SEGPPDGSGNSSPP. Composition is skewed to polar residues over residues 91–101 and 114–127; these read SESGGNNSAPN and AGNGNETKCPDEQN. Tyr136 bears the Phosphotyrosine; by host LCK mark. Positions 158–167 are CSKH/LBD2; the sequence is EEERSPFNKY. An SH3B/LBD1 region spans residues 186–195; it reads IPPPQLPPRP. The chain crosses the membrane as a helical span at residues 247–267; that stretch reads LLIGILVLLILLFMLGFLFLL. Topologically, residues 268–269 are extracellular; it reads MK.

As to quaternary structure, homodimer. Binds SH3 domain of host LYN, HCK, LCK, SRC, FYN or YES. When tyrosine-phosphorylated, binds to the SH2 domain of host LCK, SRC, or FYN. Post-translationally, phosphorylated by host LCK, SRC and less efficiently by FYN.

The protein resides in the host cell membrane. Functionally, transforms host T-cells, inducing T-cell lymphomia in the host. Activates at least SRC and LCK tyrosines kinases, thereby activating signaling pathway transforming host T-cells. Human T-cells transformed ex vivo display a IL2 indenpendent growth phenotype. The chain is Protein tio from Ateles (AtHV-3).